Consider the following 675-residue polypeptide: Methionine--tRNA ligase (675 aa).

The 'HIGH' region motif lies at 15-25 (PYANGSIHLGH). Positions 146, 149, 159, and 162 each coordinate Zn(2+). The 'KMSKS' region motif lies at 332-336 (KMSKS). K335 lines the ATP pocket. In terms of domain architecture, tRNA-binding spans 573-675 (DFAKVDMRIA…SGAQPGMQVK (103 aa)).

Belongs to the class-I aminoacyl-tRNA synthetase family. MetG type 1 subfamily. Homodimer. Zn(2+) serves as cofactor.

It is found in the cytoplasm. It catalyses the reaction tRNA(Met) + L-methionine + ATP = L-methionyl-tRNA(Met) + AMP + diphosphate. Its function is as follows. Is required not only for elongation of protein synthesis but also for the initiation of all mRNA translation through initiator tRNA(fMet) aminoacylation. The polypeptide is Methionine--tRNA ligase (Yersinia pseudotuberculosis serotype IB (strain PB1/+)).